A 477-amino-acid chain; its full sequence is UDP-N-acetylmuramate--L-alanine ligase (477 aa).

120–126 provides a ligand contact to ATP; sequence GSHGKTT.

The protein belongs to the MurCDEF family.

The protein localises to the cytoplasm. The enzyme catalyses UDP-N-acetyl-alpha-D-muramate + L-alanine + ATP = UDP-N-acetyl-alpha-D-muramoyl-L-alanine + ADP + phosphate + H(+). Its pathway is cell wall biogenesis; peptidoglycan biosynthesis. In terms of biological role, cell wall formation. The sequence is that of UDP-N-acetylmuramate--L-alanine ligase from Rickettsia canadensis (strain McKiel).